The chain runs to 339 residues: Phosphate acyltransferase (339 aa).

It belongs to the PlsX family. Homodimer. Probably interacts with PlsY.

It localises to the cytoplasm. The enzyme catalyses a fatty acyl-[ACP] + phosphate = an acyl phosphate + holo-[ACP]. It participates in lipid metabolism; phospholipid metabolism. In terms of biological role, catalyzes the reversible formation of acyl-phosphate (acyl-PO(4)) from acyl-[acyl-carrier-protein] (acyl-ACP). This enzyme utilizes acyl-ACP as fatty acyl donor, but not acyl-CoA. This chain is Phosphate acyltransferase, found in Helicobacter pylori (strain J99 / ATCC 700824) (Campylobacter pylori J99).